The primary structure comprises 596 residues: 3-hydroxy-3-methylglutaryl-coenzyme A reductase 1 (596 aa).

The interval 1 to 29 is disordered; it reads MDVRRRPVKPLYTSKDASAGEPLKQQEVS. The next 2 membrane-spanning stretches (helical) occupy residues 41-61 and 83-103; these read LYLT…FLLV and AMVS…IGFV. Residues 104–183 are linker; that stretch reads QSFVSRSNSD…SPIIMPALSE (80 aa). Residues 184–596 form a catalytic region; the sequence is DDEEIIQSVV…YNRSIKDISK (413 aa). E278 functions as the Charge relay system in the catalytic mechanism. An N-linked (GlcNAc...) asparagine glycan is attached at N342. K410 serves as the catalytic Charge relay system. N455 is a glycosylation site (N-linked (GlcNAc...) asparagine). D486 (charge relay system) is an active-site residue. H584 functions as the Proton donor in the catalytic mechanism. Residue N588 is glycosylated (N-linked (GlcNAc...) asparagine).

Belongs to the HMG-CoA reductase family. Expressed in flower primordia and anthers.

The protein localises to the endoplasmic reticulum membrane. It catalyses the reaction (R)-mevalonate + 2 NADP(+) + CoA = (3S)-3-hydroxy-3-methylglutaryl-CoA + 2 NADPH + 2 H(+). The protein operates within metabolic intermediate biosynthesis; (R)-mevalonate biosynthesis; (R)-mevalonate from acetyl-CoA: step 3/3. In terms of biological role, catalyzes the synthesis of mevalonate. The specific precursor of all isoprenoid compounds present in plants. The sequence is that of 3-hydroxy-3-methylglutaryl-coenzyme A reductase 1 (HMG1) from Solanum tuberosum (Potato).